A 432-amino-acid polypeptide reads, in one-letter code: Adenylosuccinate synthetase (432 aa).

GTP-binding positions include 13-19 (GDEGKGK) and 41-43 (GHT). Aspartate 14 serves as the catalytic Proton acceptor. 2 residues coordinate Mg(2+): aspartate 14 and glycine 41. IMP contacts are provided by residues 14–17 (DEGK), 39–42 (NAGH), threonine 130, arginine 144, glutamine 225, threonine 240, and arginine 304. Histidine 42 acts as the Proton donor in catalysis. 300 to 306 (AVTGRPR) lines the substrate pocket. Residues arginine 306, 332–334 (KLD), and 415–417 (STG) each bind GTP.

The protein belongs to the adenylosuccinate synthetase family. As to quaternary structure, homodimer. It depends on Mg(2+) as a cofactor.

It localises to the cytoplasm. The catalysed reaction is IMP + L-aspartate + GTP = N(6)-(1,2-dicarboxyethyl)-AMP + GDP + phosphate + 2 H(+). The protein operates within purine metabolism; AMP biosynthesis via de novo pathway; AMP from IMP: step 1/2. Its function is as follows. Plays an important role in the de novo pathway of purine nucleotide biosynthesis. Catalyzes the first committed step in the biosynthesis of AMP from IMP. The chain is Adenylosuccinate synthetase from Histophilus somni (strain 2336) (Haemophilus somnus).